We begin with the raw amino-acid sequence, 688 residues long: ATP-dependent RNA helicase ded1 (688 aa).

Composition is skewed to polar residues over residues Met-1–Asp-15 and Gly-55–Tyr-67. Positions Met-1–Thr-170 are disordered. Residues Gly-88–Pro-102 are compositionally biased toward gly residues. A compositionally biased stretch (low complexity) spans Gln-103 to Asn-114. Residues Ala-115 to Ser-129 show a composition bias toward gly residues. The short motif at Leu-194–Lys-222 is the Q motif element. The 192-residue stretch at Ile-225–Leu-416 folds into the Helicase ATP-binding domain. Ala-238–Thr-245 contributes to the ATP binding site. The short motif at Asp-360 to Asp-363 is the DEAD box element. One can recognise a Helicase C-terminal domain in the interval Asn-427 to Ala-587. The segment at Ser-590–Tyr-615 is disordered. Positions Phe-592 to Gly-608 are enriched in gly residues.

The protein belongs to the DEAD box helicase family. DDX3/DED1 subfamily.

It is found in the cytoplasm. It carries out the reaction ATP + H2O = ADP + phosphate + H(+). Functionally, ATP-binding RNA helicase involved in translation initiation. Remodels RNA in response to ADP and ATP concentrations by facilitating disruption, but also formation of RNA duplexes. In Neurospora crassa (strain ATCC 24698 / 74-OR23-1A / CBS 708.71 / DSM 1257 / FGSC 987), this protein is ATP-dependent RNA helicase ded1 (drh-9).